Consider the following 209-residue polypeptide: Transmembrane protein 52 (209 aa).

The N-terminal stretch at 1 to 32 (MARGPLAARGLRLLLPLLPLLPLLPLPQVALG) is a signal peptide. Residues 56-76 (VGLILLAVLLLLLCGVTAGCV) traverse the membrane as a helical segment. Residues 145 to 209 (AYSLYTPEPP…QLPPCSPGAP (65 aa)) are disordered. Basic and acidic residues predominate over residues 159-170 (EAVKMAKPREEG). Positions 186–202 (LETTPVPQESGPNTQLP) are enriched in polar residues.

It is found in the membrane. This is Transmembrane protein 52 (TMEM52) from Homo sapiens (Human).